Consider the following 173-residue polypeptide: Peptidyl-prolyl cis-trans isomerase cyp3 (173 aa).

Residues 8-172 (FMDIAIDGRL…SNVAIVECGE (165 aa)) enclose the PPIase cyclophilin-type domain.

This sequence belongs to the cyclophilin-type PPIase family. PPIase H subfamily.

It localises to the cytoplasm. The protein localises to the cytoskeleton. It is found in the microtubule organizing center. Its subcellular location is the spindle pole body. It catalyses the reaction [protein]-peptidylproline (omega=180) = [protein]-peptidylproline (omega=0). Its function is as follows. PPIases accelerate the folding of proteins. It catalyzes the cis-trans isomerization of proline imidic peptide bonds in oligopeptides. The sequence is that of Peptidyl-prolyl cis-trans isomerase cyp3 (cyp3) from Schizosaccharomyces pombe (strain 972 / ATCC 24843) (Fission yeast).